Reading from the N-terminus, the 931-residue chain is Phosphoenolpyruvate carboxylase (931 aa).

Active-site residues include His-158 and Lys-593.

This sequence belongs to the PEPCase type 1 family. Mg(2+) serves as cofactor.

The enzyme catalyses oxaloacetate + phosphate = phosphoenolpyruvate + hydrogencarbonate. Functionally, forms oxaloacetate, a four-carbon dicarboxylic acid source for the tricarboxylic acid cycle. This is Phosphoenolpyruvate carboxylase from Azorhizobium caulinodans (strain ATCC 43989 / DSM 5975 / JCM 20966 / LMG 6465 / NBRC 14845 / NCIMB 13405 / ORS 571).